The chain runs to 329 residues: 7,8-didemethyl-8-hydroxy-5-deazariboflavin synthase (329 aa).

A Radical SAM core domain is found at 1-235 (MFIPVTNICR…SDVSVQVAPN (235 aa)). Positions 9, 13, and 16 each coordinate [4Fe-4S] cluster.

Belongs to the radical SAM superfamily. CofG family. In terms of assembly, consists of two subunits, CofG and CofH. Requires [4Fe-4S] cluster as cofactor.

It catalyses the reaction 5-amino-5-(4-hydroxybenzyl)-6-(D-ribitylimino)-5,6-dihydrouracil + S-adenosyl-L-methionine = 7,8-didemethyl-8-hydroxy-5-deazariboflavin + 5'-deoxyadenosine + L-methionine + NH4(+) + H(+). The protein operates within cofactor biosynthesis; coenzyme F0 biosynthesis. Catalyzes the radical-mediated synthesis of 7,8-didemethyl-8-hydroxy-5-deazariboflavin from 5-amino-5-(4-hydroxybenzyl)-6-(D-ribitylimino)-5,6-dihydrouracil. This chain is 7,8-didemethyl-8-hydroxy-5-deazariboflavin synthase, found in Methanosarcina acetivorans (strain ATCC 35395 / DSM 2834 / JCM 12185 / C2A).